The chain runs to 210 residues: Outer-membrane lipoprotein carrier protein (210 aa).

The signal sequence occupies residues 1–22 (MRAFKWALAIGATLALPLTAQA).

It belongs to the LolA family. Monomer.

Its subcellular location is the periplasm. Participates in the translocation of lipoproteins from the inner membrane to the outer membrane. Only forms a complex with a lipoprotein if the residue after the N-terminal Cys is not an aspartate (The Asp acts as a targeting signal to indicate that the lipoprotein should stay in the inner membrane). The sequence is that of Outer-membrane lipoprotein carrier protein from Chromohalobacter salexigens (strain ATCC BAA-138 / DSM 3043 / CIP 106854 / NCIMB 13768 / 1H11).